Consider the following 633-residue polypeptide: Kelch-like protein diablo (633 aa).

The tract at residues 1 to 62 is disordered; sequence MGDLPGSTGG…ARLSHTSEKH (62 aa). The segment covering 7-25 has biased composition (gly residues); that stretch reads STGGGGGVGGGGNGGGGPT. Low complexity predominate over residues 26–45; it reads IAGTNGNSTTGPGSSTGSTG. A BTB domain is found at 80–147; the sequence is CDVVLNVGGR…CYTAHIIVEE (68 aa). Positions 182–284 constitute a BACK domain; sequence CLGIRAFADT…SPKFLVGTVG (103 aa). 6 Kelch repeats span residues 331-377, 379-425, 426-472, 474-519, 521-566, and 567-613; these read VLFA…VLND, LYAV…VLDG, FLYA…VLGG, LYAI…VFNN, IYAV…VVNG, and QLYA…VMRA.

It participates in protein modification; protein ubiquitination. Probable substrate-specific adapter of an E3 ubiquitin-protein ligase complex which mediates the ubiquitination and subsequent proteasomal degradation of target proteins. May have a role in synapse differentiation and growth. In Drosophila ananassae (Fruit fly), this protein is Kelch-like protein diablo.